The primary structure comprises 715 residues: uncharacterized protein (715 aa).

The helical transmembrane segment at 688–708 (VWKFNPALYSTITNIFLLIIF) threads the bilayer.

It belongs to the plectrovirus ORF1 family.

It localises to the host membrane. This is an uncharacterized protein from Spiroplasma virus SpV1-R8A2 B (SpV1).